The primary structure comprises 330 residues: Probable cytosolic iron-sulfur protein assembly protein ciao1-A (330 aa).

7 WD repeats span residues 14–53, 59–98, 103–142, 148–187, 192–231, 243–282, and 294–330; these read HPDS…WECK, GHQR…FECL, GHEN…EYEC, SHTQ…WECR, GHTS…GGQD, FHGR…DPDQ, and AHSQ…QSEV.

Belongs to the WD repeat CIA1 family. As to quaternary structure, component of the CIA complex.

Key component of the cytosolic iron-sulfur protein assembly (CIA) complex, a multiprotein complex that mediates the incorporation of iron-sulfur cluster into extramitochondrial Fe/S proteins. This is Probable cytosolic iron-sulfur protein assembly protein ciao1-A (ciao1a) from Salmo salar (Atlantic salmon).